Consider the following 253-residue polypeptide: Testis-expressed protein 47 (253 aa).

This chain is Testis-expressed protein 47, found in Rattus norvegicus (Rat).